Reading from the N-terminus, the 239-residue chain is NAD(P)H-quinone oxidoreductase subunit K, chloroplastic (239 aa).

The [4Fe-4S] cluster site is built by C43, C44, C108, and C139. The disordered stretch occupies residues K217–K239. Over residues L225–K239 the composition is skewed to basic and acidic residues.

Belongs to the complex I 20 kDa subunit family. NDH is composed of at least 16 different subunits, 5 of which are encoded in the nucleus. [4Fe-4S] cluster is required as a cofactor.

The protein localises to the plastid. The protein resides in the chloroplast thylakoid membrane. The catalysed reaction is a plastoquinone + NADH + (n+1) H(+)(in) = a plastoquinol + NAD(+) + n H(+)(out). It carries out the reaction a plastoquinone + NADPH + (n+1) H(+)(in) = a plastoquinol + NADP(+) + n H(+)(out). NDH shuttles electrons from NAD(P)H:plastoquinone, via FMN and iron-sulfur (Fe-S) centers, to quinones in the photosynthetic chain and possibly in a chloroplast respiratory chain. The immediate electron acceptor for the enzyme in this species is believed to be plastoquinone. Couples the redox reaction to proton translocation, and thus conserves the redox energy in a proton gradient. In Acorus calamus var. americanus (American sweet flag), this protein is NAD(P)H-quinone oxidoreductase subunit K, chloroplastic.